Here is a 674-residue protein sequence, read N- to C-terminus: Zinc finger protein 750 (674 aa).

Residues 25 to 51 (YKCFQCPFTCNEKSHLFNHMKYGLCKN) form a CCHC-type zinc finger. Zn(2+) is bound by residues Cys-27, Cys-30, His-43, and Cys-49. Disordered stretches follow at residues 105 to 125 (EAKE…KTTV), 370 to 466 (LAKN…QSHS), and 594 to 674 (TSSP…PRVS). Polar residues-rich tracts occupy residues 401-411 (SPTNFTQSSQG) and 444-466 (DSQT…QSHS).

The protein resides in the nucleus. Transcription factor involved in epidermis differentiation. This is Zinc finger protein 750 (znf750) from Xenopus laevis (African clawed frog).